A 79-amino-acid chain; its full sequence is Putative membrane protein insertion efficiency factor (79 aa).

The protein belongs to the UPF0161 family.

It is found in the cell inner membrane. Could be involved in insertion of integral membrane proteins into the membrane. The sequence is that of Putative membrane protein insertion efficiency factor from Prochlorococcus marinus (strain NATL2A).